The primary structure comprises 303 residues: MNVLPVVGRFAPSPTGAMHLGNARTALLAWLHSRALGGLHLLRFEDLDTGRVRSWAYDTTRRDLEWLGLDWDAEFRQSERLPVYADAVSRLTAAGETYPCTCTRREIRQAIEDSAGAPHGHEPVYPGTCRLHGAMPGRPAALRWHVPDGTVCVTDALTCATLCQNLPAEVGDFVLRRNDGVYAYHLAVVVDDALMGVTDVVRGADLWTATPRQVALGRALGSAPPRYLHVPLMTDFRGERLAKRGGAPPLRALREGGEEAGRVLSALARSLGWAVPERVSAAELLPLWRAQLTRAGFFINPQS.

L-glutamate-binding positions include 9 to 13 (RFAPS) and glutamate 45. The 'HIGH' region motif lies at 12 to 22 (PSPTGAMHLGN). Zn(2+)-binding residues include cysteine 100, cysteine 102, tyrosine 125, and cysteine 129. Residues tyrosine 184 and arginine 202 each coordinate L-glutamate. Residues 240 to 244 (RLAKR) carry the 'KMSKS' region motif. Residue lysine 243 coordinates ATP.

It belongs to the class-I aminoacyl-tRNA synthetase family. GluQ subfamily. The cofactor is Zn(2+).

Functionally, catalyzes the tRNA-independent activation of glutamate in presence of ATP and the subsequent transfer of glutamate onto a tRNA(Asp). Glutamate is transferred on the 2-amino-5-(4,5-dihydroxy-2-cyclopenten-1-yl) moiety of the queuosine in the wobble position of the QUC anticodon. In Deinococcus geothermalis (strain DSM 11300 / CIP 105573 / AG-3a), this protein is Glutamyl-Q tRNA(Asp) synthetase.